Consider the following 297-residue polypeptide: Glycine--tRNA ligase alpha subunit (297 aa).

The protein belongs to the class-II aminoacyl-tRNA synthetase family. As to quaternary structure, tetramer of two alpha and two beta subunits.

Its subcellular location is the cytoplasm. It carries out the reaction tRNA(Gly) + glycine + ATP = glycyl-tRNA(Gly) + AMP + diphosphate. The sequence is that of Glycine--tRNA ligase alpha subunit (glyQ) from Halalkalibacterium halodurans (strain ATCC BAA-125 / DSM 18197 / FERM 7344 / JCM 9153 / C-125) (Bacillus halodurans).